Here is a 705-residue protein sequence, read N- to C-terminus: Ribosomal RNA large subunit methyltransferase K/L (705 aa).

Residues 43 to 154 (VVYRCCLWSR…GEKGILGFDL (112 aa)) form the THUMP domain.

This sequence belongs to the methyltransferase superfamily. RlmKL family.

It is found in the cytoplasm. It catalyses the reaction guanosine(2445) in 23S rRNA + S-adenosyl-L-methionine = N(2)-methylguanosine(2445) in 23S rRNA + S-adenosyl-L-homocysteine + H(+). The catalysed reaction is guanosine(2069) in 23S rRNA + S-adenosyl-L-methionine = N(2)-methylguanosine(2069) in 23S rRNA + S-adenosyl-L-homocysteine + H(+). Its function is as follows. Specifically methylates the guanine in position 2445 (m2G2445) and the guanine in position 2069 (m7G2069) of 23S rRNA. This is Ribosomal RNA large subunit methyltransferase K/L from Aliivibrio fischeri (strain MJ11) (Vibrio fischeri).